The sequence spans 341 residues: tRNA N6-adenosine threonylcarbamoyltransferase (341 aa).

Fe cation-binding residues include His-111 and His-115. Substrate-binding positions include 134-138 (LVSGG), Asp-167, Gly-180, and Asn-276. Asp-304 contacts Fe cation.

The protein belongs to the KAE1 / TsaD family. It depends on Fe(2+) as a cofactor.

It localises to the cytoplasm. The enzyme catalyses L-threonylcarbamoyladenylate + adenosine(37) in tRNA = N(6)-L-threonylcarbamoyladenosine(37) in tRNA + AMP + H(+). Its function is as follows. Required for the formation of a threonylcarbamoyl group on adenosine at position 37 (t(6)A37) in tRNAs that read codons beginning with adenine. Is involved in the transfer of the threonylcarbamoyl moiety of threonylcarbamoyl-AMP (TC-AMP) to the N6 group of A37, together with TsaE and TsaB. TsaD likely plays a direct catalytic role in this reaction. The sequence is that of tRNA N6-adenosine threonylcarbamoyltransferase from Alteromonas mediterranea (strain DSM 17117 / CIP 110805 / LMG 28347 / Deep ecotype).